Here is a 510-residue protein sequence, read N- to C-terminus: Laccase (510 aa).

4 Plastocyanin-like domains span residues 45-79 (PTKL…LPLK), 99-174 (KTVV…LISD), 242-317 (YLEV…IVLK), and 372-506 (LTLT…MRPM). Positions 103, 105, 151, and 153 each coordinate Cu cation. Cu cation is bound by residues histidine 419, histidine 422, histidine 424, histidine 491, cysteine 492, histidine 493, histidine 497, and methionine 502.

It belongs to the multicopper oxidase family. It depends on Cu(2+) as a cofactor.

It carries out the reaction 4 hydroquinone + O2 = 4 benzosemiquinone + 2 H2O. With respect to regulation, resistant to alkali and organic solvents such as methanol, ethanol and acetone. Resistant to EDTA, which might be explained by the spatial protection of copper ions in the active sites. Inhibited by DMSO. Strongly inhibited by Fe(2+) and DTT. Functionally, multicopper oxidase that catalyzes the oxidation of a variety of substrates, including phenolic and non-phenolic compounds. Substrates include 2,6-dimethoxyphenol (2,6-DMP) and the non-phenolic compound 2,2'-azino-bis(3-ethylbenzothiazoline-6-sulfonic acid) (ABTS). Cannot use guaiacol and catechol. In Bacillus stratosphericus, this protein is Laccase.